A 591-amino-acid chain; its full sequence is Acyl-CoA-dependent acyltransferase MAC1 (591 aa).

The segment at 589–591 (ARL) is peroxisomal targeting signal type 1.

It belongs to the trichothecene O-acetyltransferase family.

It localises to the peroxisome. It functions in the pathway secondary metabolite biosynthesis. Its function is as follows. Acyl-CoA-dependent acyltransferase; part of the gene cluster that mediates the biosynthesis of mannosylerythritol lipids (MELs), surface-active substances that enhance the availability of water-insoluble substrates. Mannosylerythritol lipid production is responsible for hemolytic activity of Ustilago maydis. Depending on the number of acetyl groups, mannosylerythritol lipids can be differentiated into MEL A (fully acetylated), MEL B and MEL C (monoacetylated at R-6 and R-4, respectively), and the fully deacetylated MEL D. The first step in the pathway is the generation of mannosylerythritol by the glycosyltransferase EMT1 which catalyzes the transfer of GDP-mannose to the C-4 atom of meso-erythritol. This reaction has to be stereospecific, since only mannosyl-D-erythritol is generated. The produced disaccharide is subsequently acylated with fatty acids of various lengths derived from the peroxisomal beta-oxidation by the peroxisomal acyltransferases MAC1 and MAC2 at positions C-2 and C-3, repectively. The existence of MEL derivatives which carry an acetyl group at C-2 implies that at least MAC1 also accepts acetyl-CoA as a donor. The final step of MEL biosynthesis is the acetylation of the fully acylated mannosylerythritol lipids catalyzed by the acetyl-CoA-dependent acetyltransferase MAT1. MAT1 displays a relaxed regioselectivity and is able to transfer acetylgroups to both positions C-4 and C-6 of the mannosyl moiety. This is Acyl-CoA-dependent acyltransferase MAC1 from Mycosarcoma maydis (Corn smut fungus).